Consider the following 208-residue polypeptide: Ribosomal RNA small subunit methyltransferase G (208 aa).

Residues Gly-75, Leu-80, 126 to 127 (VE), and Arg-141 each bind S-adenosyl-L-methionine.

This sequence belongs to the methyltransferase superfamily. RNA methyltransferase RsmG family.

It is found in the cytoplasm. The catalysed reaction is guanosine(527) in 16S rRNA + S-adenosyl-L-methionine = N(7)-methylguanosine(527) in 16S rRNA + S-adenosyl-L-homocysteine. Functionally, specifically methylates the N7 position of guanine in position 527 of 16S rRNA. This chain is Ribosomal RNA small subunit methyltransferase G, found in Marinomonas sp. (strain MWYL1).